We begin with the raw amino-acid sequence, 353 residues long: Ubiquinol oxidase 2, mitochondrial (353 aa).

Residues 1–21 (MSQLITKAALRVLLVCGRGNC) constitute a mitochondrion transit peptide. Residues 178–198 (AMMLETVAAVPGMVGGMLLHL) form a helical membrane-spanning segment. Positions 182, 221, and 224 each coordinate Fe cation. A helical membrane pass occupies residues 240-260 (LLVMLVQGIFFNSFFVCYVIS). Residues Glu272, Glu323, and His326 each coordinate Fe cation.

Belongs to the alternative oxidase family. In terms of assembly, homodimer; disulfide-linked. Fe cation is required as a cofactor. As to expression, maximally expressed in dry seeds. Detected in roots, stems and leaves.

The protein resides in the mitochondrion inner membrane. The enzyme catalyses 2 a ubiquinol + O2 = 2 a ubiquinone + 2 H2O. In terms of biological role, catalyzes the cyanide-resistant oxidation of ubiquinol and the reduction of molecular oxygen to water, but does not translocate protons and consequently is not linked to oxidative phosphorylation. May increase respiration when the cytochrome respiratory pathway is restricted, or in response to low temperatures. In Arabidopsis thaliana (Mouse-ear cress), this protein is Ubiquinol oxidase 2, mitochondrial (AOX2).